The primary structure comprises 399 residues: P2X purinoceptor 1 (399 aa).

Residues 1-28 (MARRLQDELSAFFFEYDTPRMVLVRNKK) are Cytoplasmic-facing. A helical membrane pass occupies residues 29–50 (VGVIFRLIQLVVLVYVIGWVFV). The Extracellular portion of the chain corresponds to 51–338 (YEKGYQTSSD…IPTMTTIGSG (288 aa)). Positions 68, 70, and 140 each coordinate CTP. Position 70 (Lys-70) interacts with ATP. Disulfide bonds link Cys-117–Cys-165, Cys-126–Cys-149, and Cys-132–Cys-159. Asn-153 and Asn-184 each carry an N-linked (GlcNAc...) asparagine glycan. Position 186 (Thr-186) interacts with CTP. Thr-186 is an ATP binding site. N-linked (GlcNAc...) asparagine glycosylation occurs at Asn-210. 2 cysteine pairs are disulfide-bonded: Cys-217–Cys-227 and Cys-261–Cys-270. Ser-286, Asn-290, and Arg-292 together coordinate ATP. The CTP site is built by Asn-290 and Arg-292. N-linked (GlcNAc...) asparagine glycosylation occurs at Asn-300. Lys-309 lines the CTP pocket. Lys-309 is an ATP binding site. A pore-forming motif region spans residues 331-338 (TMTTIGSG). A helical transmembrane segment spans residues 339–358 (IGIFGVATVLCDLLLLHILP). At 359–399 (KRHYYKQKKFKYAEDMGPGEGEHDPVATSSTLGLQENMRTS) the chain is on the cytoplasmic side. A disordered region spans residues 374-399 (MGPGEGEHDPVATSSTLGLQENMRTS). Positions 385–399 (ATSSTLGLQENMRTS) are enriched in polar residues. A phosphoserine mark is found at Ser-387 and Ser-388. Thr-389 is modified (phosphothreonine).

The protein belongs to the P2X receptor family. As to quaternary structure, functional P2XRs are organized as homomeric and heteromeric trimers. Homotrimer. Forms heterodimer with P2RX2. Forms heterodimer with P2RX4. Forms heterodimer with P2RX5. High levels in vas deferens and urinary bladder. Lower extent in spinal cord, coeliac ganglion, lung and spleen (probably in the smooth muscle part of both organs).

It is found in the cell membrane. The catalysed reaction is Ca(2+)(in) = Ca(2+)(out). It carries out the reaction K(+)(in) = K(+)(out). The enzyme catalyses Na(+)(in) = Na(+)(out). Its activity is regulated as follows. Activated by low concentrations of ATP (&lt;1 uM). Undergoes rapid desensitisation. Sensitives to the ATP agonist:alpha/beta-methylene-ATP. Modulated by cholesterol. Functionally, ATP-gated nonselective transmembrane cation channel permeable to potassium, sodium and with relatively high calcium permeability. Furthermore, CTP functions as a weak affinity agonist for P2RX1. Plays a role a role in urogenital, immune and cardiovascular function. Specifically, plays an important role in neurogenic contraction of smooth muscle of the vas deferens, and therefore is essential for normal male reproductive function. In addition, contributes to smooth muscle contractions of the urinary bladder. On platelets, contributes to platelet activation and aggregation and thereby, also to thrombosis. On neutrophils, it is involved in chemotaxis and in mitigating the activation of circulating cells. The polypeptide is P2X purinoceptor 1 (P2rx1) (Rattus norvegicus (Rat)).